The primary structure comprises 350 residues: Bifunctional methylenetetrahydrofolate dehydrogenase/cyclohydrolase, mitochondrial (350 aa).

The transit peptide at 1 to 35 (MASVSLLSALAVRLLRPTHGCHPRLQPFHLAAVRN) directs the protein to the mitochondrion. An N6-acetyllysine; alternate modification is found at K50. A Glycyl lysine isopeptide (Lys-Gly) (interchain with G-Cter in SUMO2); alternate cross-link involves residue K50. Substrate-binding positions include 84 to 88 (YVLNK) and 131 to 133 (VQL). Residues 200–202 (GRS) and R233 contribute to the NAD(+) site. 309–313 (PGGVG) contributes to the substrate binding site.

The protein belongs to the tetrahydrofolate dehydrogenase/cyclohydrolase family. In terms of assembly, homodimer. Mg(2+) serves as cofactor.

It is found in the mitochondrion. The catalysed reaction is (6R)-5,10-methylene-5,6,7,8-tetrahydrofolate + NAD(+) = (6R)-5,10-methenyltetrahydrofolate + NADH. It carries out the reaction (6R)-5,10-methenyltetrahydrofolate + H2O = (6R)-10-formyltetrahydrofolate + H(+). In terms of biological role, although its dehydrogenase activity is NAD-specific, it can also utilize NADP at a reduced efficiency. This Mus musculus (Mouse) protein is Bifunctional methylenetetrahydrofolate dehydrogenase/cyclohydrolase, mitochondrial (Mthfd2).